The chain runs to 325 residues: MIDEVEEIAVKSAYEPGPYGYRPQERPIFLYLDHGLIILDKPKGPSSHEVTERVKRILEYPGKVGHCGTLDPKVSGVLPIVLGNATKLSKFISGYDKEYVGTLYLHGDVPIDELKGALDKFTGPIFQRPPVKSAVKRSLRVRRVYSIELLSSEGRFHKLRVRVESGTYIRKLFFDIGEFLGVGGSMRDLRRIRSGIFTEKDCVTLEDIKDAYDSWRESGDESKIRKVILPLEEAVRHLPKIYVKDSAVASLTHGASLKVKGICSLSRGIKKGSIVALMTLKGELIAIGRALMDFDEMLSADSGVAASIERVIMPRDLYPPMWKTG.

The active-site Nucleophile is D71. The region spanning L238–M313 is the PUA domain.

This sequence belongs to the pseudouridine synthase TruB family. Type 2 subfamily.

The catalysed reaction is uridine(55) in tRNA = pseudouridine(55) in tRNA. Could be responsible for synthesis of pseudouridine from uracil-55 in the psi GC loop of transfer RNAs. The protein is Probable tRNA pseudouridine synthase B of Korarchaeum cryptofilum (strain OPF8).